The sequence spans 440 residues: MSIEVKMPALSPTMTEGTLAKWLVKEGDAVKAGDILAEIETDKAIMEFETVDAGIIAKILVPEGSENIAVGQVIAVMAEAGEDVSQVAASASSQISEPSEKADVAQKETADSETISIDASLDKAISNAGYGNKTENMTASYQEKAGRIKASPLAKRLAKKNHVDLKQVNGSGPHGRIIKADIEAFIAEANQASSNPSVSTPEASGKITHDTPHNSIKLSNMRRVIARRLTESKQNIPHIYLTVDVQMDALLKLRSELNESLAVQNIKISVNDMLIKAQALALKATPNVNVAFDGDQMLQFSQADISVAVSVEGGLITPILKQADTKSLSALSVEMKELIARAREGRLQPQEYQGGTSSISNMGMFGIKQFNAVINPPQASILAIGSGERRPWVIDDAITIATVATITGSFDHRVIDGADAAAFMSAFKHLVEKPLGILAQ.

One can recognise a Lipoyl-binding domain in the interval 2 to 78; sequence SIEVKMPALS…AVGQVIAVMA (77 aa). Lys-43 bears the N6-lipoyllysine mark. Residues 91-113 are disordered; the sequence is ASSQISEPSEKADVAQKETADSE. Positions 98–110 are enriched in basic and acidic residues; the sequence is PSEKADVAQKETA. The region spanning 149–186 is the Peripheral subunit-binding (PSBD) domain; it reads KASPLAKRLAKKNHVDLKQVNGSGPHGRIIKADIEAFI. Residues 192 to 202 show a composition bias toward polar residues; the sequence is ASSNPSVSTPE. Residues 192–214 are disordered; it reads ASSNPSVSTPEASGKITHDTPHN. The active site involves His-412.

The protein belongs to the 2-oxoacid dehydrogenase family. As to quaternary structure, forms a 24-polypeptide structural core with octahedral symmetry. It depends on (R)-lipoate as a cofactor.

The catalysed reaction is N(6)-[(R)-dihydrolipoyl]-L-lysyl-[protein] + acetyl-CoA = N(6)-[(R)-S(8)-acetyldihydrolipoyl]-L-lysyl-[protein] + CoA. Its function is as follows. The pyruvate dehydrogenase complex catalyzes the overall conversion of pyruvate to acetyl-CoA and CO(2). It contains multiple copies of three enzymatic components: pyruvate dehydrogenase (E1), dihydrolipoamide acetyltransferase (E2) and lipoamide dehydrogenase (E3). This is Dihydrolipoyllysine-residue acetyltransferase component of pyruvate dehydrogenase complex (pdhC) from Zymomonas mobilis subsp. mobilis (strain ATCC 31821 / ZM4 / CP4).